The primary structure comprises 511 residues: Xylose import ATP-binding protein XylG (511 aa).

2 consecutive ABC transporter domains span residues 6 to 244 (LEMR…VGRE) and 261 to 506 (FEAR…IGKP). Position 38 to 45 (38 to 45 (GENGAGKS)) interacts with ATP.

This sequence belongs to the ABC transporter superfamily. Xylose importer (TC 3.A.1.2.4) family. The complex is composed of two ATP-binding proteins (XylG), two transmembrane proteins (XylH) and a solute-binding protein (XylF).

It localises to the cell inner membrane. The catalysed reaction is D-xylose(out) + ATP + H2O = D-xylose(in) + ADP + phosphate + H(+). In terms of biological role, part of the ABC transporter complex XylFGH involved in xylose import. Responsible for energy coupling to the transport system. In Brucella suis biovar 1 (strain 1330), this protein is Xylose import ATP-binding protein XylG.